The primary structure comprises 917 residues: Translation initiation factor IF-2 (917 aa).

The interval 1–312 (MEEQKSIKET…KGGREENENT (312 aa)) is disordered. Positions 20 to 30 (TKKKLVIKKKA) are enriched in basic residues. The span at 41–59 (PGAQGQTTATEAKQSSPAS) shows a compositional bias: polar residues. 2 stretches are compositionally biased toward basic and acidic residues: residues 60 to 76 (SDKK…EAKR) and 95 to 118 (RPDR…RKPE). Composition is skewed to gly residues over residues 132 to 141 (SGGGQGGGNQ), 167 to 256 (QTGG…GYQG), and 281 to 293 (APGG…GPGG). Basic and acidic residues predominate over residues 297-312 (RVFDKEKGGREENENT). Positions 414-587 (TRPPVVTIMG…ELLDHKANPK (174 aa)) constitute a tr-type G domain. Residues 423-430 (GHVDHGKT) form a G1 region. Residue 423 to 430 (GHVDHGKT) coordinates GTP. The G2 stretch occupies residues 448–452 (GITQH). The tract at residues 469-472 (DTPG) is G3. Residues 469–473 (DTPGH) and 523–526 (NKID) each bind GTP. Residues 523–526 (NKID) are G4. Residues 559–561 (SAK) are G5.

Belongs to the TRAFAC class translation factor GTPase superfamily. Classic translation factor GTPase family. IF-2 subfamily.

It localises to the cytoplasm. Functionally, one of the essential components for the initiation of protein synthesis. Protects formylmethionyl-tRNA from spontaneous hydrolysis and promotes its binding to the 30S ribosomal subunits. Also involved in the hydrolysis of GTP during the formation of the 70S ribosomal complex. In Leptospira biflexa serovar Patoc (strain Patoc 1 / ATCC 23582 / Paris), this protein is Translation initiation factor IF-2.